Consider the following 147-residue polypeptide: Phosphoribosyl-AMP cyclohydrolase (147 aa).

Mg(2+) is bound at residue Asp91. Cys92 provides a ligand contact to Zn(2+). 2 residues coordinate Mg(2+): Asp93 and Asp95. Cys108 and Cys115 together coordinate Zn(2+).

Belongs to the PRA-CH family. As to quaternary structure, homodimer. Mg(2+) serves as cofactor. Requires Zn(2+) as cofactor.

Its subcellular location is the cytoplasm. The enzyme catalyses 1-(5-phospho-beta-D-ribosyl)-5'-AMP + H2O = 1-(5-phospho-beta-D-ribosyl)-5-[(5-phospho-beta-D-ribosylamino)methylideneamino]imidazole-4-carboxamide. The protein operates within amino-acid biosynthesis; L-histidine biosynthesis; L-histidine from 5-phospho-alpha-D-ribose 1-diphosphate: step 3/9. Its function is as follows. Catalyzes the hydrolysis of the adenine ring of phosphoribosyl-AMP. This chain is Phosphoribosyl-AMP cyclohydrolase, found in Rhodopseudomonas palustris (strain BisB5).